Consider the following 464-residue polypeptide: tRNA modification GTPase MnmE (464 aa).

(6S)-5-formyl-5,6,7,8-tetrahydrofolate contacts are provided by arginine 25, glutamate 87, and lysine 130. The region spanning 226–386 (GLSVVLAGQP…LRAELLRIAG (161 aa)) is the TrmE-type G domain. Residue asparagine 236 participates in K(+) binding. Residues 236–241 (NVGKSS), 255–261 (TPIAGTT), and 280–283 (DTAG) each bind GTP. Serine 240 contacts Mg(2+). Threonine 255, isoleucine 257, and threonine 260 together coordinate K(+). Threonine 261 contributes to the Mg(2+) binding site. A (6S)-5-formyl-5,6,7,8-tetrahydrofolate-binding site is contributed by lysine 464.

Belongs to the TRAFAC class TrmE-Era-EngA-EngB-Septin-like GTPase superfamily. TrmE GTPase family. In terms of assembly, homodimer. Heterotetramer of two MnmE and two MnmG subunits. It depends on K(+) as a cofactor.

The protein localises to the cytoplasm. Functionally, exhibits a very high intrinsic GTPase hydrolysis rate. Involved in the addition of a carboxymethylaminomethyl (cmnm) group at the wobble position (U34) of certain tRNAs, forming tRNA-cmnm(5)s(2)U34. This is tRNA modification GTPase MnmE from Burkholderia lata (strain ATCC 17760 / DSM 23089 / LMG 22485 / NCIMB 9086 / R18194 / 383).